Reading from the N-terminus, the 363-residue chain is Fructose-bisphosphate aldolase 1 (363 aa).

Residue D34 coordinates dihydroxyacetone phosphate. D-glyceraldehyde 3-phosphate-binding residues include S36 and T39. R43 is a beta-D-fructose 1,6-bisphosphate binding site. K107 contributes to the D-glyceraldehyde 3-phosphate binding site. Dihydroxyacetone phosphate is bound at residue K146. E189 contributes to the D-glyceraldehyde 3-phosphate binding site. The active-site Proton acceptor is the E189. Residues K231, S273, and G274 each contribute to the dihydroxyacetone phosphate site. K231 serves as the catalytic Schiff-base intermediate with dihydroxyacetone phosphate. Residues 273–275 (SGG) and S301 each bind beta-D-fructose 1,6-bisphosphate. Positions 303 and 304 each coordinate dihydroxyacetone phosphate. R304 lines the beta-D-fructose 1,6-bisphosphate pocket.

This sequence belongs to the class I fructose-bisphosphate aldolase family. Homotetramer. Component of a complex, at least composed of ald-1, microneme protein MIC2 and ACT1. Interacts with microneme protein MIC2 (via cytoplasmic tail). Interacts with ACT1 (F-actin).

Its subcellular location is the cytoplasm. It carries out the reaction beta-D-fructose 1,6-bisphosphate = D-glyceraldehyde 3-phosphate + dihydroxyacetone phosphate. Its pathway is carbohydrate degradation; glycolysis; D-glyceraldehyde 3-phosphate and glycerone phosphate from D-glucose: step 4/4. Its function is as follows. Plays a key role in glycolysis by catalyzing the cleavage of fructose 1,6-bisphosphate into dihydroxyacetone phosphate and glyceraldehyde 3-phosphate. Forms a bridge between cell surface adhesins and the actin cytoskeleton. Required for parasite invasion of host cells. The polypeptide is Fructose-bisphosphate aldolase 1 (Toxoplasma gondii).